The chain runs to 396 residues: Flavohemoprotein (396 aa).

A Globin domain is found at 1–136; it reads MLDAQTIATV…LANVFINREA (136 aa). His-85 serves as a coordination point for heme b. Residues Tyr-95 and Glu-135 each act as charge relay system in the active site. The interval 147-396 is reductase; it reads GGWEGTRDFR…YECFGPHKVL (250 aa). The region spanning 150-255 is the FAD-binding FR-type domain; that stretch reads EGTRDFRIVA…VAPAGDFFMA (106 aa). Residues Tyr-188 and 204–207 contribute to the FAD site; that span reads RQYS. An NADP(+)-binding site is contributed by 268 to 273; that stretch reads GVGQTP. Residue 389–392 coordinates FAD; that stretch reads CFGP.

Belongs to the globin family. Two-domain flavohemoproteins subfamily. It in the C-terminal section; belongs to the flavoprotein pyridine nucleotide cytochrome reductase family. Heme b is required as a cofactor. FAD serves as cofactor.

The enzyme catalyses 2 nitric oxide + NADPH + 2 O2 = 2 nitrate + NADP(+) + H(+). The catalysed reaction is 2 nitric oxide + NADH + 2 O2 = 2 nitrate + NAD(+) + H(+). Is involved in NO detoxification in an aerobic process, termed nitric oxide dioxygenase (NOD) reaction that utilizes O(2) and NAD(P)H to convert NO to nitrate, which protects the bacterium from various noxious nitrogen compounds. Therefore, plays a central role in the inducible response to nitrosative stress. The chain is Flavohemoprotein from Shigella flexneri.